The chain runs to 815 residues: SNF1 protein kinase subunit beta-1 (815 aa).

Over residues Met-1–Ser-11 the composition is skewed to polar residues. Disordered stretches follow at residues Met-1–Lys-88 and Ser-117–Lys-148. A lipid anchor (N-myristoyl glycine) is attached at Gly-2. Positions His-12–Gln-31 are enriched in basic and acidic residues. A compositionally biased stretch (polar residues) spans Gly-32–Arg-42. At Ser-33 the chain carries Phosphoserine. 2 stretches are compositionally biased toward basic and acidic residues: residues Pro-72–Lys-88 and Ser-117–Val-129. A phosphoserine mark is found at Ser-181, Ser-198, Ser-200, Ser-206, Ser-209, and Ser-220. 3 disordered regions span residues Ser-310–Phe-335, His-363–Leu-389, and Pro-410–Ser-444. Positions Asn-313 to Gly-326 are enriched in low complexity. A Phosphoserine modification is found at Ser-331. Residues His-363–Arg-376 show a composition bias toward basic residues. Low complexity-rich tracts occupy residues Ser-377–Leu-389 and His-433–Ser-444. Positions Val-473–Glu-716 are kinase-interacting sequence (KIS); required for interaction with SNF1. 2 positions are modified to phosphoserine: Ser-494 and Ser-497. The segment at Thr-583–Ser-616 is disordered. Positions Glu-587–Arg-596 are enriched in basic and acidic residues. Over residues Ser-599–Ser-608 the composition is skewed to low complexity. Ser-643 is modified (phosphoserine). The association with SNF1 kinase complex (ASC) domain; required for interaction with SNF4 stretch occupies residues Ser-724–Cys-804.

It belongs to the 5'-AMP-activated protein kinase beta subunit family. Component of the SNF1 kinase complex, a heterotrimeric complex composed of the catalytic alpha subunit SNF1, one of the three related beta subunits SIP1, SIP2 or GAL83, and the regulatory gamma subunit SNF4. The beta subunit serves as a bridge between the catalytic and the regulatory subunit. Interacts (via KIS domain) with SNF1. Interacts (via ASC domain) with SNF4. Post-translationally, phosphorylated by SNF1 in vitro.

The protein localises to the cytoplasm. It localises to the vacuole membrane. In terms of biological role, beta subunit of the SNF1 kinase complex, which is required for transcriptional, metabolic, and developmental adaptations in response to glucose limitation. Has a structural role, mediating heterotrimer formation, and a regulatory role, defining carbon source-regulated subcellular location and substrate specificity of the SNF1 kinase complex. Promotes the PKA-regulated relocalization of the SNF1 kinase complex to the vacuolar membrane in response to various types of carbon stress. The protein is SNF1 protein kinase subunit beta-1 (SIP1) of Saccharomyces cerevisiae (strain YJM789) (Baker's yeast).